The following is a 488-amino-acid chain: Catalase (488 aa).

The interval 1–24 (MTERKNLTTNQGTPVGDNQNSMTA) is disordered. Polar residues predominate over residues 7–23 (LTTNQGTPVGDNQNSMT). Residues H55 and N128 contribute to the active site. Y338 contributes to the heme binding site.

It belongs to the catalase family. Heme serves as cofactor.

Its subcellular location is the cytoplasm. The enzyme catalyses 2 H2O2 = O2 + 2 H2O. Decomposes hydrogen peroxide into water and oxygen; serves to protect cells from the toxic effects of hydrogen peroxide. The chain is Catalase (kat) from Listeria innocua serovar 6a (strain ATCC BAA-680 / CLIP 11262).